The following is a 506-amino-acid chain: Apolipoprotein N-acyltransferase (506 aa).

A run of 7 helical transmembrane segments spans residues 10–30 (ANAKVLSRWLLFVGLGIAGWG), 33–53 (LALPPVSGWFLAFVGIVPLWW), 57–77 (VLAPLWAAIAGLCWGWGFYGS), 105–125 (IWLCLSSWGAVLSGSWALLMA), 139–159 (WGVTLWCALEALWSHSPLWWI), 176–196 (LAGPTTITAVVMTVNGLVTLS), and 205–225 (VGLAMTLVAAIALNGVLSVRV). The region spanning 238–473 (IQGNIPTREK…FVIYAATIFR (236 aa)) is the CN hydrolase domain. Catalysis depends on glutamate 279, which acts as the Proton acceptor. Residue lysine 336 is part of the active site. Residue cysteine 385 is the Nucleophile of the active site. Residues 483 to 500 (YGDWLLPLLLGMLSLSVL) form a helical membrane-spanning segment.

The protein belongs to the CN hydrolase family. Apolipoprotein N-acyltransferase subfamily.

The protein resides in the cell inner membrane. The enzyme catalyses N-terminal S-1,2-diacyl-sn-glyceryl-L-cysteinyl-[lipoprotein] + a glycerophospholipid = N-acyl-S-1,2-diacyl-sn-glyceryl-L-cysteinyl-[lipoprotein] + a 2-acyl-sn-glycero-3-phospholipid + H(+). The protein operates within protein modification; lipoprotein biosynthesis (N-acyl transfer). Its function is as follows. Catalyzes the phospholipid dependent N-acylation of the N-terminal cysteine of apolipoprotein, the last step in lipoprotein maturation. This chain is Apolipoprotein N-acyltransferase, found in Thermosynechococcus vestitus (strain NIES-2133 / IAM M-273 / BP-1).